Reading from the N-terminus, the 883-residue chain is Aldehyde-alcohol dehydrogenase (883 aa).

The interval 13–456 (KLVAEKHVDE…DNVSAINLLN (444 aa)) is aldehyde dehydrogenase. NAD(+)-binding positions include 121-126 (ITPTTN), G206, and G224. C257 (nucleophile) is an active-site residue. Residues E355, L435, and 438 to 443 (GSYGRN) each bind NAD(+). A linker region spans residues 457–464 (IKKVGRRR). Residues D500, D534, 561 to 565 (GSPMD), 612 to 613 (TT), V625, K634, and L653 each bind NAD(+). Positions 668, 672, 736, and 750 each coordinate Fe cation.

In the N-terminal section; belongs to the aldehyde dehydrogenase family. It in the C-terminal section; belongs to the iron-containing alcohol dehydrogenase family. It depends on Fe(2+) as a cofactor.

The catalysed reaction is ethanol + NAD(+) = acetaldehyde + NADH + H(+). The enzyme catalyses an aldehyde + NAD(+) + H2O = a carboxylate + NADH + 2 H(+). Functionally, has alcohol dehydrogenase activity. Has aldehyde dehydrogenase activity. May play a role in enhancing virulence in mice. May be considered a potential virulence factor. The sequence is that of Aldehyde-alcohol dehydrogenase from Streptococcus pneumoniae serotype 4 (strain ATCC BAA-334 / TIGR4).